We begin with the raw amino-acid sequence, 322 residues long: Undecaprenyl-phosphate 4-deoxy-4-formamido-L-arabinose transferase (322 aa).

Residues 1–235 (MFEIHPVKKV…TCLTTTPLRM (235 aa)) are Cytoplasmic-facing. A helical membrane pass occupies residues 236-256 (LSLLGSIIAIGGFSIAVLLVI). The Periplasmic segment spans residues 257-269 (LRLTFGPQWAAEG). A helical membrane pass occupies residues 270–290 (VFMLFAVLFTFIGAQFIGMGL). Residues 291-322 (LGEYIGRIYTDVRARPRYFVQQVIRPSSKENE) are Cytoplasmic-facing.

This sequence belongs to the glycosyltransferase 2 family.

It localises to the cell inner membrane. The catalysed reaction is UDP-4-deoxy-4-formamido-beta-L-arabinose + di-trans,octa-cis-undecaprenyl phosphate = 4-deoxy-4-formamido-alpha-L-arabinopyranosyl di-trans,octa-cis-undecaprenyl phosphate + UDP. Its pathway is glycolipid biosynthesis; 4-amino-4-deoxy-alpha-L-arabinose undecaprenyl phosphate biosynthesis; 4-amino-4-deoxy-alpha-L-arabinose undecaprenyl phosphate from UDP-4-deoxy-4-formamido-beta-L-arabinose and undecaprenyl phosphate: step 1/2. It functions in the pathway bacterial outer membrane biogenesis; lipopolysaccharide biosynthesis. Functionally, catalyzes the transfer of 4-deoxy-4-formamido-L-arabinose from UDP to undecaprenyl phosphate. The modified arabinose is attached to lipid A and is required for resistance to polymyxin and cationic antimicrobial peptides. This chain is Undecaprenyl-phosphate 4-deoxy-4-formamido-L-arabinose transferase, found in Escherichia coli O139:H28 (strain E24377A / ETEC).